The sequence spans 188 residues: dCTP deaminase (188 aa).

DCTP contacts are provided by residues 111–116, 135–137, glutamine 156, tyrosine 170, and glutamine 180; these read KSTYAR and TLE. Glutamate 137 acts as the Proton donor/acceptor in catalysis.

Belongs to the dCTP deaminase family. Homotrimer.

The catalysed reaction is dCTP + H2O + H(+) = dUTP + NH4(+). Its pathway is pyrimidine metabolism; dUMP biosynthesis; dUMP from dCTP (dUTP route): step 1/2. Functionally, catalyzes the deamination of dCTP to dUTP. This chain is dCTP deaminase, found in Thioalkalivibrio sulfidiphilus (strain HL-EbGR7).